The following is a 584-amino-acid chain: Isopropyl malate synthase htyA (584 aa).

A Pyruvate carboxyltransferase domain is found at 39-317 (PIWLSTDLRD…ETGLDFSNLP (279 aa)).

The protein belongs to the alpha-IPM synthase/homocitrate synthase family. LeuA type 2 subfamily.

The catalysed reaction is 3-methyl-2-oxobutanoate + acetyl-CoA + H2O = (2S)-2-isopropylmalate + CoA + H(+). It functions in the pathway antifungal biosynthesis. Its function is as follows. Isopropyl malate synthase; part of the gene cluster that mediates the de novo generation of L-homotyrosine from acetyl-CoA and 4-hydroxyphenyl-pyruvate. L-homotyrosine is a building block of echinocandin B, a fungal lipidated cyclic hexapeptide that acts as an antifungal agent. L-homotyrosine 4-hydroxyphenyl-pyruvate first undergoes an aldol-type condensation by htyA with the C-2 of acetyl-CoA followed by the release of CoA to form 2-(4-hydroxybenzyl)-malate. This is followed by isomerization of 2-(4-hydroxy-benzyl)-malate to 3-(4-hydroxybenzyl)-malate by htyD. Thereafter, 3-(4-hydroxybenzyl)-malate undergoes decarboxylation and oxidation to form 2-oxo-4-(4-hydroxybenzyl)butanoic acid, coupled to reduction of NAD(+) to NADH by htyC. The product then undergoes transamination catalyzed by htyB to form L-homotyrosine. The sequence is that of Isopropyl malate synthase htyA from Aspergillus rugulosus (Emericella rugulosa).